Reading from the N-terminus, the 778-residue chain is Endonuclease MutS2 (778 aa).

329–336 (GPNTGGKT) is a binding site for ATP. Residues 703–778 (LDLRGKRYEE…GSGCTIVTFK (76 aa)) enclose the Smr domain.

The protein belongs to the DNA mismatch repair MutS family. MutS2 subfamily. In terms of assembly, homodimer. Binds to stalled ribosomes, contacting rRNA.

Its function is as follows. Endonuclease that is involved in the suppression of homologous recombination and thus may have a key role in the control of bacterial genetic diversity. Functionally, acts as a ribosome collision sensor, splitting the ribosome into its 2 subunits. Detects stalled/collided 70S ribosomes which it binds and splits by an ATP-hydrolysis driven conformational change. Acts upstream of the ribosome quality control system (RQC), a ribosome-associated complex that mediates the extraction of incompletely synthesized nascent chains from stalled ribosomes and their subsequent degradation. Probably generates substrates for RQC. The polypeptide is Endonuclease MutS2 (Streptococcus suis (strain 98HAH33)).